The primary structure comprises 244 residues: Heat stress transcription factor B-3 (244 aa).

A DNA-binding region spans residues Pro38–Ser132. The segment at Thr173 to Arg218 is hydrophobic repeat HR-A/B. The Nuclear localization signal motif lies at Lys202–Lys208. The tract at residues Arg216 to Glu244 is disordered. A compositionally biased stretch (acidic residues) spans Glu220–Glu234. The Nuclear export signal signature appears at Leu236–Leu243.

It belongs to the HSF family. Class B subfamily. Homotrimer. Exhibits temperature-dependent phosphorylation.

It is found in the cytoplasm. Its subcellular location is the nucleus. Transcriptional regulator that specifically binds DNA sequence 5'-AGAAnnTTCT-3' known as heat shock promoter elements (HSE). The chain is Heat stress transcription factor B-3 (HSFB3) from Arabidopsis thaliana (Mouse-ear cress).